The chain runs to 662 residues: 72 kDa type IV collagenase (662 aa).

The first 29 residues, 1-29 (MEALGARGALAGFLRALCVLGCLLGRATA), serve as a signal peptide directing secretion. Residues 30 to 109 (PPSPVIKFPG…PRCGNPDVAN (80 aa)) constitute a propeptide, activation peptide. Positions 100-107 (PRCGNPDV) match the Cysteine switch motif. Cys-102 contacts Zn(2+). The tract at residues 110–221 (YNFFPRKPKW…LWTLGEGQVV (112 aa)) is collagenase-like 1. The Ca(2+) site is built by Asp-134 and Asp-168. Positions 178 and 180 each coordinate Zn(2+). Ca(2+) contacts are provided by Asp-185 and Gly-186. Residue His-193 coordinates Zn(2+). 3 residues coordinate Ca(2+): Gly-200, Gly-202, and Asp-204. Position 206 (His-206) interacts with Zn(2+). 3 residues coordinate Ca(2+): Asp-208, Asp-209, and Glu-211. The interval 222 to 396 (RVKYGNADGE…WGFCPDQGYS (175 aa)) is collagen-binding. 3 Fibronectin type-II domains span residues 228–276 (ADGE…FCPH), 286–334 (ADGQ…FCPE), and 344–392 (SEGA…FCPD). 6 cysteine pairs are disulfide-bonded: Cys-233–Cys-259, Cys-247–Cys-274, Cys-291–Cys-317, Cys-305–Cys-332, Cys-349–Cys-375, and Cys-363–Cys-390. The interval 397 to 467 (LFLVAAHEFG…GPTPTLGPVT (71 aa)) is collagenase-like 2. His-403 lines the Zn(2+) pocket. Glu-404 is a catalytic residue. The Zn(2+) site is built by His-407 and His-413. Residues 414–662 (SQDPGALMAP…GSIKTDWLGC (249 aa)) form a required for inhibitor TIMP2 binding region. A disulfide bridge connects residues Cys-471 and Cys-662. Hemopexin repeat units follow at residues 474–518 (DIVF…WPEL), 519–565 (PEKI…GLPP), 567–615 (VQRV…WNAI), and 616–662 (PDHL…WLGC). Positions 478, 523, and 571 each coordinate Ca(2+). N-linked (GlcNAc...) asparagine glycosylation is present at Asn-575. A Ca(2+)-binding site is contributed by Asp-620. Asn-644 is a glycosylation site (N-linked (GlcNAc...) asparagine).

This sequence belongs to the peptidase M10A family. Interacts (via the C-terminal hemopexin-like domains-containing region) with the integrin alpha-V/beta-3; the interaction promotes vascular invasion in angiogenic vessels and melamoma cells. Interacts (via the C-terminal PEX domain) with TIMP2 (via the C-terminal); the interaction inhibits the degradation activity. Interacts with GSK3B. Ca(2+) serves as cofactor. It depends on Zn(2+) as a cofactor. Phosphorylation on multiple sites modulates enzymatic activity. Phosphorylated by PKC in vitro. In terms of processing, the propeptide is processed by MMP14 (MT-MMP1) and MMP16 (MT-MMP3). Autocatalytic cleavage in the C-terminal produces the anti-angiogenic peptide, PEX. This processing appears to be facilitated by binding integrinv/beta3.

It localises to the secreted. Its subcellular location is the extracellular space. It is found in the extracellular matrix. The protein resides in the membrane. The protein localises to the nucleus. The enzyme catalyses Cleavage of gelatin type I and collagen types IV, V, VII, X. Cleaves the collagen-like sequence Pro-Gln-Gly-|-Ile-Ala-Gly-Gln.. In terms of biological role, ubiquitinous metalloproteinase that is involved in diverse functions such as remodeling of the vasculature, angiogenesis, tissue repair, tumor invasion, inflammation, and atherosclerotic plaque rupture. As well as degrading extracellular matrix proteins, can also act on several nonmatrix proteins such as big endothelial 1 and beta-type CGRP promoting vasoconstriction. Also cleaves KISS at a Gly-|-Leu bond. Appears to have a role in myocardial cell death pathways. Contributes to myocardial oxidative stress by regulating the activity of GSK3beta. Cleaves GSK3beta in vitro. Involved in the formation of the fibrovascular tissues. Functionally, PEX, the C-terminal non-catalytic fragment of MMP2, possesses anti-angiogenic and anti-tumor properties and inhibits cell migration and cell adhesion to FGF2 and vitronectin. Ligand for integrin alpha-v/beta-3 on the surface of blood vessels. This chain is 72 kDa type IV collagenase (MMP2), found in Oryctolagus cuniculus (Rabbit).